An 816-amino-acid polypeptide reads, in one-letter code: Phosphatidylinositol 4-kinase beta (816 aa).

Residues methionine 1–leucine 30 are disordered. Glycine 2 is modified (N-acetylglycine). The segment at glycine 2–isoleucine 68 is interaction with ACBD3. The PIK helical domain occupies cysteine 52–serine 242. Residues alanine 248–serine 318 form a disordered region. Residue serine 258 is modified to Phosphoserine. Threonine 263 bears the Phosphothreonine mark. A phosphoserine mark is found at serine 266, serine 275, serine 277, serine 284, and serine 294. 2 stretches are compositionally biased toward polar residues: residues aspartate 278 to lysine 297 and serine 306 to serine 318. Residue serine 428 is modified to Phosphoserine. At threonine 438 the chain carries Phosphothreonine. At serine 511 the chain carries Phosphoserine. Threonine 517 and threonine 519 each carry phosphothreonine. The PI3K/PI4K catalytic domain occupies glutamate 535–threonine 801. Positions valine 541 to glycine 547 are G-loop. Residues glutamine 668–asparagine 676 are catalytic loop. The segment at histidine 687–threonine 711 is activation loop.

It belongs to the PI3/PI4-kinase family. Type III PI4K subfamily. In terms of assembly, interacts with ARF1 and ARF3 in the Golgi complex, but not with ARF4, ARF5 or ARF6. Interacts with NCS1/FREQ in a calcium-independent manner. Interacts with CALN1/CABP8 and CALN2/CABP7; in a calcium-dependent manner; this interaction competes with NCS1/FREQ binding. Interacts with ACBD3. Interacts with ARMH3, YWHAB, YWHAE, YWHAG, YWHAH, YWHAQ, YWHAZ and SFN. Interacts with GGA2 (via VHS domain); the interaction is important for PI4KB location at the Golgi apparatus membrane. Interacts with ATG9A. Mg(2+) is required as a cofactor. The cofactor is Mn(2+).

The protein localises to the endomembrane system. It localises to the mitochondrion outer membrane. It is found in the rough endoplasmic reticulum membrane. Its subcellular location is the golgi apparatus. The protein resides in the golgi apparatus membrane. The enzyme catalyses a 1,2-diacyl-sn-glycero-3-phospho-(1D-myo-inositol) + ATP = a 1,2-diacyl-sn-glycero-3-phospho-(1D-myo-inositol 4-phosphate) + ADP + H(+). With respect to regulation, inhibited by wortmannin. Increased kinase activity upon interaction with NCS1/FREQ. Phosphorylates phosphatidylinositol (PI) in the first committed step in the production of the second messenger inositol-1,4,5,-trisphosphate (PIP). May regulate Golgi disintegration/reorganization during mitosis, possibly via its phosphorylation. Involved in Golgi-to-plasma membrane trafficking. May play an important role in the inner ear development. The protein is Phosphatidylinositol 4-kinase beta (PI4KB) of Otolemur garnettii (Small-eared galago).